A 693-amino-acid polypeptide reads, in one-letter code: Elongation factor G (693 aa).

Residues 8 to 283 (NRCRNIGIMA…AVVDYLPSPL (276 aa)) form the tr-type G domain. Residues 17–24 (AHIDAGKT), 81–85 (DTPGH), and 135–138 (NKMD) each bind GTP.

Belongs to the TRAFAC class translation factor GTPase superfamily. Classic translation factor GTPase family. EF-G/EF-2 subfamily.

The protein resides in the cytoplasm. In terms of biological role, catalyzes the GTP-dependent ribosomal translocation step during translation elongation. During this step, the ribosome changes from the pre-translocational (PRE) to the post-translocational (POST) state as the newly formed A-site-bound peptidyl-tRNA and P-site-bound deacylated tRNA move to the P and E sites, respectively. Catalyzes the coordinated movement of the two tRNA molecules, the mRNA and conformational changes in the ribosome. In Acidobacterium capsulatum (strain ATCC 51196 / DSM 11244 / BCRC 80197 / JCM 7670 / NBRC 15755 / NCIMB 13165 / 161), this protein is Elongation factor G.